The sequence spans 361 residues: Cyclin-dependent kinase 10 (361 aa).

The 285-residue stretch at 37–321 folds into the Protein kinase domain; sequence FEKLNRIGEG…AGDCLESSYF (285 aa). ATP-binding positions include 43–51 and Lys-66; that span reads IGEGTYGIV. Asp-161 serves as the catalytic Proton acceptor. Thr-194 carries the post-translational modification Phosphothreonine. Residues 332–361 form a disordered region; the sequence is LMPTFPHHRNKRATPATSLGTESQSRRGRP.

Belongs to the protein kinase superfamily. CMGC Ser/Thr protein kinase family. CDC2/CDKX subfamily. In terms of assembly, heterodimer with CCNQ, the interaction is required for kinase activity. Interacts with ETS2. Interacts with PRK2.

Its subcellular location is the cytoplasm. It is found in the cytoskeleton. The protein resides in the cilium basal body. It catalyses the reaction L-seryl-[protein] + ATP = O-phospho-L-seryl-[protein] + ADP + H(+). The catalysed reaction is L-threonyl-[protein] + ATP = O-phospho-L-threonyl-[protein] + ADP + H(+). Its function is as follows. Cyclin-dependent kinase that phosphorylates the transcription factor ETS2 (in vitro) and positively controls its proteasomal degradation (in cells). Involved in the regulation of actin cytoskeleton organization through the phosphorylation of actin dynamics regulators such as PKN2. Is a negative regulator of ciliogenesis through phosphorylation of PKN2 and promotion of RhoA signaling. The polypeptide is Cyclin-dependent kinase 10 (CDK10) (Bos taurus (Bovine)).